Reading from the N-terminus, the 537-residue chain is MASTRAKPTLPLLLALVTVVIPGPGDAQVSIHPREAFLPQGGSVQVNCSSSCKEDLSLGLETQWLKDELESGPNWKLFELSEIGEDSSPLCFENCGTVQSSASATITVYSFPESVELRPLPAWQQVGKDLTLRCHVDGGAPRTQLSAVLLRGEEILSRQPVGGHPKDPKEITFTVLASRGDHGANFSCRTELDLRPQGLALFSNVSEARSLRTFDLPATIPKLDTPDLLEVGTQQKLFCSLEGLFPASEARIYLELGGQMPTQESTNSSDSVSATALVEVTEEFDRTLPLRCVLELADQILETQRTLTVYNFSAPVLTLSQLEVSEGSQVTVKCEAHSGSKVVLLSGVEPRPPTPQVQFTLNASSEDHKRSFFCSAALEVAGKFLFKNQTLELHVLYGPRLDETDCLGNWTWQEGSQQTLKCQAWGNPSPKMTCRRKADGALLPIGVVKSVKQEMNGTYVCHAFSSHGNVTRNVYLTVLYHSQNNWTIIILVPVLLVIVGLVMAASYVYNRQRKIRIYKLQKAQEEAIKLKGQAPPP.

An N-terminal signal peptide occupies residues 1-27 (MASTRAKPTLPLLLALVTVVIPGPGDA). Residues 28–485 (QVSIHPREAF…LTVLYHSQNN (458 aa)) lie on the Extracellular side of the membrane. Ig-like C2-type domains lie at 41 to 102 (GGSV…QSSA) and 127 to 195 (GKDL…LDLR). Residue asparagine 47 is glycosylated (N-linked (GlcNAc...) asparagine). 3 disulfides stabilise this stretch: cysteine 48-cysteine 91, cysteine 52-cysteine 95, and cysteine 134-cysteine 188. Residues 151 to 153 (RGE) carry the Cell attachment site; atypical motif. Positions 179 to 181 (RGD) match the Cell attachment site motif. Residues asparagine 185, asparagine 204, asparagine 267, asparagine 311, asparagine 362, asparagine 388, asparagine 409, asparagine 456, and asparagine 469 are each glycosylated (N-linked (GlcNAc...) asparagine). In terms of domain architecture, Ig-like C2-type 3 spans 232-299 (GTQQKLFCSL…LRCVLELADQ (68 aa)). An intrachain disulfide couples cysteine 239 to cysteine 292. One can recognise an Ig-like C2-type 4 domain in the interval 327–381 (GSQVTVKCEAHSGSKVVLLSGVEPRPPTPQVQFTLNASSEDHKRSFFCSAALEVA). Residues cysteine 334 and cysteine 374 are joined by a disulfide bond. Intrachain disulfides connect cysteine 406-cysteine 422, cysteine 422-cysteine 461, and cysteine 434-cysteine 461. The Ig-like C2-type 5 domain occupies 415–468 (GSQQTLKCQAWGNPSPKMTCRRKADGALLPIGVVKSVKQEMNGTYVCHAFSSHG). A helical membrane pass occupies residues 486-509 (WTIIILVPVLLVIVGLVMAASYVY). The Cytoplasmic segment spans residues 510-537 (NRQRKIRIYKLQKAQEEAIKLKGQAPPP).

This sequence belongs to the immunoglobulin superfamily. ICAM family. In terms of assembly, homodimer. Interacts with MUC1 and promotes cell aggregation in epithelial cells. Interacts with ARHGEF26/SGEF. Interacts (on T cell side) with CD81, CD247 and CD9 at immunological synapses between antigen-presenting cells and T cells. Post-translationally, monoubiquitinated, which is promoted by MARCH9 and leads to endocytosis. In terms of tissue distribution, expressed at low level on a subpopulation of lymphocytes, macrophages, and endothelial cells, but is strongly induced on these cells, and on fibroblasts and epithelial cells.

Its subcellular location is the membrane. Functionally, ICAM proteins are ligands for the leukocyte adhesion protein LFA-1 (integrin alpha-L/beta-2). During leukocyte trans-endothelial migration, ICAM1 engagement promotes the assembly of endothelial apical cups through ARHGEF26/SGEF and RHOG activation. This Mus musculus (Mouse) protein is Intercellular adhesion molecule 1 (Icam1).